Here is a 514-residue protein sequence, read N- to C-terminus: MSIRDEIKKRRTFAIISHPDAGKTTITEQLLYFGGEIREAGTVKGKKTGNFAKSDWMDIEKQRGISVTSSVMQFDYAGKRVNILDTPGHEDFSEDTYRTLMAVDAAVMVVDSAKGIEAQTKKLFEVVKHRGIPVFTFMNKLDRDGREPLDLLEELEEVLGIASYPMNWPIGMGKAFEGLYDLYNERLELYKGNERFAKIEDGDTLFANNPFYEQTKEDIELLTEAGNEFSEEAILAGELTPVFFGSALTNFGVQTFLDTFLKFAPEPHGHKTVDGDEIDPLNKDFSGFVFKIQANMDPRHRDRIAFVRIVSGEFERGMSVNLTRTGKGAKLSNVTQFMAESRENVENAVAGDIIGVYDTGTYQVGDTLTVGKNKFEFEPLPTFTPELFMKVSAKNVMKQKSFHKGIEQLVQEGAIQLYTNYQTGEYMLGAVGQLQFEVFKHRMENEYNAEVVMTPMGKKTVRWIQPEDLDERMSSSRNILAKDRFDQPVFLFENDFALRWFADKYPDVTLEEKM.

The tr-type G domain occupies 8–268 (KKRRTFAIIS…TFLKFAPEPH (261 aa)). Residues 17-24 (SHPDAGKT), 85-89 (DTPGH), and 139-142 (NKLD) contribute to the GTP site.

It belongs to the TRAFAC class translation factor GTPase superfamily. Classic translation factor GTPase family. PrfC subfamily.

It localises to the cytoplasm. Increases the formation of ribosomal termination complexes and stimulates activities of RF-1 and RF-2. It binds guanine nucleotides and has strong preference for UGA stop codons. It may interact directly with the ribosome. The stimulation of RF-1 and RF-2 is significantly reduced by GTP and GDP, but not by GMP. The protein is Peptide chain release factor 3 of Streptococcus thermophilus (strain CNRZ 1066).